Reading from the N-terminus, the 944-residue chain is Protein translocase subunit SecA (944 aa).

ATP is bound by residues Gln77, 95–99 (GEGKT), and Asp484. Residues 920–944 (EQEKQTKKKKKKKPHDDETTKVKIG) form a disordered region. Residues 933–944 (PHDDETTKVKIG) show a composition bias toward basic and acidic residues.

This sequence belongs to the SecA family. As to quaternary structure, monomer and homodimer. Part of the essential Sec protein translocation apparatus which comprises SecA, SecYEG and auxiliary proteins SecDF. Other proteins may also be involved.

It is found in the cell membrane. The protein localises to the cytoplasm. It carries out the reaction ATP + H2O + cellular proteinSide 1 = ADP + phosphate + cellular proteinSide 2.. Its function is as follows. Part of the Sec protein translocase complex. Interacts with the SecYEG preprotein conducting channel. Has a central role in coupling the hydrolysis of ATP to the transfer of proteins into and across the cell membrane, serving as an ATP-driven molecular motor driving the stepwise translocation of polypeptide chains across the membrane. The polypeptide is Protein translocase subunit SecA (Mycoplasma capricolum subsp. capricolum (strain California kid / ATCC 27343 / NCTC 10154)).